Here is a 373-residue protein sequence, read N- to C-terminus: Histidinol-phosphate aminotransferase (373 aa).

At Lys-233 the chain carries N6-(pyridoxal phosphate)lysine.

This sequence belongs to the class-II pyridoxal-phosphate-dependent aminotransferase family. Histidinol-phosphate aminotransferase subfamily. In terms of assembly, homodimer. The cofactor is pyridoxal 5'-phosphate.

The enzyme catalyses L-histidinol phosphate + 2-oxoglutarate = 3-(imidazol-4-yl)-2-oxopropyl phosphate + L-glutamate. It participates in amino-acid biosynthesis; L-histidine biosynthesis; L-histidine from 5-phospho-alpha-D-ribose 1-diphosphate: step 7/9. This is Histidinol-phosphate aminotransferase from Nitratidesulfovibrio vulgaris (strain ATCC 29579 / DSM 644 / CCUG 34227 / NCIMB 8303 / VKM B-1760 / Hildenborough) (Desulfovibrio vulgaris).